Consider the following 210-residue polypeptide: NEDD4 family-interacting protein 1-like (210 aa).

The segment at 1-31 (MAEPSGRYQQLPCEEEPEAGPQVAADAPPPY) is disordered. Residues 1 to 105 (MAEPSGRYQQ…ADQLRIGNDG (105 aa)) lie on the Cytoplasmic side of the membrane. 2 consecutive short sequence motifs (PPxY motif) follow at residues 30–33 (PYSS) and 53–56 (PPSY). A helical membrane pass occupies residues 106 to 126 (IFMLTFFMAFLFNWIGFFLSF). Topologically, residues 127–132 (CLTTSA) are extracellular. The chain crosses the membrane as a helical span at residues 133–153 (AGRYGAISGFGLSLIKWILIV). The Cytoplasmic segment spans residues 154 to 161 (RFSTYFPG). A helical transmembrane segment spans residues 162–182 (YFDGQYWLWWVFLVLGFLLFL). Topologically, residues 183–210 (RGFINYAKIRKMADSFSTLPRTRVLFIY) are extracellular.

It is found in the golgi apparatus membrane. May play a role in Golgi structure maintenance. The chain is NEDD4 family-interacting protein 1-like (ndfip1l) from Danio rerio (Zebrafish).